Here is a 513-residue protein sequence, read N- to C-terminus: uncharacterized protein (513 aa).

A run of 5 helical transmembrane segments spans residues 262–282 (FAIF…FWQL), 304–324 (YMFL…ITYH), 341–361 (EPIP…FEAL), 382–402 (LVIG…VIIV), and 429–449 (MFLA…ILVL). Residues 489–513 (PGTYSRGNGQKGAKREDPKDEENNI) form a disordered region. Over residues 501-513 (AKREDPKDEENNI) the composition is skewed to basic and acidic residues.

This sequence belongs to the GerABKA family.

It is found in the cell membrane. This is an uncharacterized protein from Bacillus subtilis (strain 168).